We begin with the raw amino-acid sequence, 486 residues long: Protein hold'em (486 aa).

The segment at residues 166–285 (IITTNVNLLV…DCRLLLAFAA (120 aa)) is a DNA-binding region (OB).

It belongs to the MEIOB family. Interacts with mei-9 and Ercc1.

Functionally, single-stranded DNA-binding protein required for meiosis. May be involved in the resolution of recombination intermediates into crossovers in the meiotic recombination pathway. This is Protein hold'em (hdm) from Drosophila melanogaster (Fruit fly).